Consider the following 144-residue polypeptide: Large ribosomal subunit protein uL15 (144 aa).

Residues 1–56 (MELNNLKPAAGAKHAKRRVGRGIGSGLGKTAGRGHKGQKSRSGGFHKVGFEGGQMP) form a disordered region. Residues 21 to 31 (RGIGSGLGKTA) are compositionally biased toward gly residues.

Belongs to the universal ribosomal protein uL15 family. As to quaternary structure, part of the 50S ribosomal subunit.

Binds to the 23S rRNA. The sequence is that of Large ribosomal subunit protein uL15 from Burkholderia ambifaria (strain MC40-6).